The chain runs to 98 residues: MALTKAEMSEYLFEKLGLSKRDAKEIVELFFEEVRRALENGEQVKLSGFGNFDLRDKNQRPGRNPKTGEDIPITARRVVTFRPGQKLKSRVENASPKE.

The interval F49–D70 is disordered.

This sequence belongs to the bacterial histone-like protein family. In terms of assembly, heterodimer of an alpha and a beta chain.

Functionally, this protein is one of the two subunits of integration host factor, a specific DNA-binding protein that functions in genetic recombination as well as in transcriptional and translational control. This chain is Integration host factor subunit alpha, found in Sodalis glossinidius (strain morsitans).